The primary structure comprises 345 residues: Magnesium-chelatase 38 kDa subunit (345 aa).

35–42 provides a ligand contact to ATP; that stretch reads GDRGTGKS.

Belongs to the Mg-chelatase subunits D/I family.

It carries out the reaction protoporphyrin IX + Mg(2+) + ATP + H2O = Mg-protoporphyrin IX + ADP + phosphate + 3 H(+). The protein operates within porphyrin-containing compound metabolism; bacteriochlorophyll biosynthesis. Its function is as follows. Involved in bacteriochlorophyll biosynthesis; introduces a magnesium ion into protoporphyrin IX to yield Mg-protoporphyrin IX. This chain is Magnesium-chelatase 38 kDa subunit (bchI), found in Acidiphilium rubrum.